Here is a 222-residue protein sequence, read N- to C-terminus: RING finger protein 141 (222 aa).

The segment at 147–184 (CCICMDGKADLILPCAHSFCQKCIDKWSGQSRNCPVCR) adopts an RING-type zinc-finger fold.

The polypeptide is RING finger protein 141 (rnf141) (Danio rerio (Zebrafish)).